The chain runs to 322 residues: N-acetyl-gamma-glutamyl-phosphate reductase (322 aa).

The active site involves C132.

Belongs to the NAGSA dehydrogenase family. Type 1 subfamily.

It is found in the cytoplasm. The catalysed reaction is N-acetyl-L-glutamate 5-semialdehyde + phosphate + NADP(+) = N-acetyl-L-glutamyl 5-phosphate + NADPH + H(+). It participates in amino-acid biosynthesis; L-arginine biosynthesis; N(2)-acetyl-L-ornithine from L-glutamate: step 3/4. Functionally, catalyzes the NADPH-dependent reduction of N-acetyl-5-glutamyl phosphate to yield N-acetyl-L-glutamate 5-semialdehyde. This Bacteroides thetaiotaomicron (strain ATCC 29148 / DSM 2079 / JCM 5827 / CCUG 10774 / NCTC 10582 / VPI-5482 / E50) protein is N-acetyl-gamma-glutamyl-phosphate reductase.